A 300-amino-acid polypeptide reads, in one-letter code: Eukaryotic translation initiation factor 3 subunit F (300 aa).

The 137-residue stretch at 33-169 (VKVHPVALFS…VQCYVSALLG (137 aa)) folds into the MPN domain.

It belongs to the eIF-3 subunit F family. Component of the eukaryotic translation initiation factor 3 (eIF-3) complex.

It localises to the cytoplasm. Its function is as follows. Component of the eukaryotic translation initiation factor 3 (eIF-3) complex, which is involved in protein synthesis of a specialized repertoire of mRNAs and, together with other initiation factors, stimulates binding of mRNA and methionyl-tRNAi to the 40S ribosome. The eIF-3 complex specifically targets and initiates translation of a subset of mRNAs involved in cell proliferation. The chain is Eukaryotic translation initiation factor 3 subunit F from Malassezia globosa (strain ATCC MYA-4612 / CBS 7966) (Dandruff-associated fungus).